A 220-amino-acid chain; its full sequence is Iron-sulfur cluster repair protein YtfE (220 aa).

This sequence belongs to the RIC family. YtfE subfamily. In terms of assembly, homodimer.

The protein resides in the cytoplasm. Di-iron-containing protein involved in the repair of iron-sulfur clusters damaged by oxidative and nitrosative stress conditions. In Salmonella schwarzengrund (strain CVM19633), this protein is Iron-sulfur cluster repair protein YtfE.